The following is a 1411-amino-acid chain: DNA-directed RNA polymerase subunit beta' (1411 aa).

Zn(2+)-binding residues include Cys70, Cys72, Cys85, and Cys88. Residues Asp460, Asp462, and Asp464 each coordinate Mg(2+). Positions 814, 888, 895, and 898 each coordinate Zn(2+).

Belongs to the RNA polymerase beta' chain family. The RNAP catalytic core consists of 2 alpha, 1 beta, 1 beta' and 1 omega subunit. When a sigma factor is associated with the core the holoenzyme is formed, which can initiate transcription. Mg(2+) serves as cofactor. It depends on Zn(2+) as a cofactor.

The enzyme catalyses RNA(n) + a ribonucleoside 5'-triphosphate = RNA(n+1) + diphosphate. Functionally, DNA-dependent RNA polymerase catalyzes the transcription of DNA into RNA using the four ribonucleoside triphosphates as substrates. The sequence is that of DNA-directed RNA polymerase subunit beta' from Idiomarina loihiensis (strain ATCC BAA-735 / DSM 15497 / L2-TR).